The chain runs to 332 residues: 5-dehydro-2-deoxygluconokinase (332 aa).

The protein belongs to the carbohydrate kinase PfkB family.

The catalysed reaction is 5-dehydro-2-deoxy-D-gluconate + ATP = 6-phospho-5-dehydro-2-deoxy-D-gluconate + ADP + H(+). It functions in the pathway polyol metabolism; myo-inositol degradation into acetyl-CoA; acetyl-CoA from myo-inositol: step 5/7. In terms of biological role, catalyzes the phosphorylation of 5-dehydro-2-deoxy-D-gluconate (2-deoxy-5-keto-D-gluconate or DKG) to 6-phospho-5-dehydro-2-deoxy-D-gluconate (DKGP). This Bacillus anthracis (strain A0248) protein is 5-dehydro-2-deoxygluconokinase.